The following is a 97-amino-acid chain: Aspartyl/glutamyl-tRNA(Asn/Gln) amidotransferase subunit C (97 aa).

The protein belongs to the GatC family. In terms of assembly, heterotrimer of A, B and C subunits.

The catalysed reaction is L-glutamyl-tRNA(Gln) + L-glutamine + ATP + H2O = L-glutaminyl-tRNA(Gln) + L-glutamate + ADP + phosphate + H(+). It carries out the reaction L-aspartyl-tRNA(Asn) + L-glutamine + ATP + H2O = L-asparaginyl-tRNA(Asn) + L-glutamate + ADP + phosphate + 2 H(+). Its function is as follows. Allows the formation of correctly charged Asn-tRNA(Asn) or Gln-tRNA(Gln) through the transamidation of misacylated Asp-tRNA(Asn) or Glu-tRNA(Gln) in organisms which lack either or both of asparaginyl-tRNA or glutaminyl-tRNA synthetases. The reaction takes place in the presence of glutamine and ATP through an activated phospho-Asp-tRNA(Asn) or phospho-Glu-tRNA(Gln). This Synechococcus sp. (strain JA-2-3B'a(2-13)) (Cyanobacteria bacterium Yellowstone B-Prime) protein is Aspartyl/glutamyl-tRNA(Asn/Gln) amidotransferase subunit C.